Reading from the N-terminus, the 268-residue chain is Protein MSS18 (268 aa).

The protein to baculovirus occlusion-derived virus envelope protein E27 (ODV-E27).

Its subcellular location is the mitochondrion. Functionally, involved in splicing of intron aI5-beta of the mitochondrial COX1 transcript. The polypeptide is Protein MSS18 (MSS18) (Saccharomyces cerevisiae (strain ATCC 204508 / S288c) (Baker's yeast)).